We begin with the raw amino-acid sequence, 344 residues long: Phenylalanine--tRNA ligase alpha subunit (344 aa).

Glu-269 is a binding site for Mg(2+).

It belongs to the class-II aminoacyl-tRNA synthetase family. Phe-tRNA synthetase alpha subunit type 1 subfamily. Tetramer of two alpha and two beta subunits. Mg(2+) is required as a cofactor.

It localises to the cytoplasm. The enzyme catalyses tRNA(Phe) + L-phenylalanine + ATP = L-phenylalanyl-tRNA(Phe) + AMP + diphosphate + H(+). This is Phenylalanine--tRNA ligase alpha subunit from Ralstonia nicotianae (strain ATCC BAA-1114 / GMI1000) (Ralstonia solanacearum).